Here is a 277-residue protein sequence, read N- to C-terminus: MEAAAAIAPQRAWGKGRLVAKTGGARTRIAGLYQEGCAKIRLPRTFDASMEAVLINSSGGVTGGDRLAWEFEAGEGTNLTLTTQACEKVYKASVDTAVVATRISVAARGHVDWLPQESILFDRSALSRSLEVDLAPDASFLALEAVLIGRKAMGETVRSGLFRDHWRIRSGGALVHAENLALAGDIAALGSRRAVLDGAVAFATLVYVAPDCEALLPRLRTSLAEHALSGVSHFAVNGRDKIVARVVAADGFALRKILIPLISHLRKGASVPRVWTL.

It belongs to the UreD family. As to quaternary structure, ureD, UreF and UreG form a complex that acts as a GTP-hydrolysis-dependent molecular chaperone, activating the urease apoprotein by helping to assemble the nickel containing metallocenter of UreC. The UreE protein probably delivers the nickel.

The protein localises to the cytoplasm. In terms of biological role, required for maturation of urease via the functional incorporation of the urease nickel metallocenter. This Sinorhizobium medicae (strain WSM419) (Ensifer medicae) protein is Urease accessory protein UreD.